The chain runs to 325 residues: Germination protease (325 aa).

The propeptide occupies 1-7 (MYNVRTD).

Belongs to the peptidase A25 family. In terms of assembly, homotetramer. Post-translationally, autoproteolytically processed. The inactive tetrameric zymogen termed p46 autoprocesses to a smaller form termed p41, which is active only during spore germination.

The enzyme catalyses Endopeptidase action with P4 Glu or Asp, P1 preferably Glu &gt; Asp, P1' hydrophobic and P2' Ala.. Functionally, initiates the rapid degradation of small, acid-soluble proteins during spore germination. This Clostridium perfringens (strain 13 / Type A) protein is Germination protease.